The following is a 123-amino-acid chain: Putative C-type lectin protein FPV003/FPV258 (123 aa).

Residues 21–122 (CRGPYTSYNN…CNATYGFVCI (102 aa)) form the C-type lectin domain.

The sequence is that of Putative C-type lectin protein FPV003/FPV258 from Fowlpox virus (strain NVSL) (FPV).